The primary structure comprises 335 residues: Probable cytosolic iron-sulfur protein assembly protein Ciao1 (335 aa).

7 WD repeats span residues 12 to 51 (GHKGRIWGVAWHPKGNVFASCGEDKAIRIWSLTGSTWSTK), 57 to 96 (GHKRTIREIRWSPCGQYLASASFDATTAIWSKSSGEFECN), 101 to 140 (GHENEVKSVSWSRSGGLLATCSRDKSVWIWEVAGDDEFEC), 146 to 185 (SHTQDVKRVVWHPTKEVLASASYDNTIKMYAEDPVDNDWD), 192 to 231 (SHTSTIWGIDFDADGERLVSCSDDTTIKIWKAYHPGNSAG), 250 to 289 (QHSRAIYDVSWCKLTGLIATACGDDGIRIFKETSDSKPDE), and 301 to 335 (AHDQDVNSVQWNPVVAGQLISCSDDGTIKIWKVTE).

Belongs to the WD repeat CIA1 family.

Functionally, essential component of the cytosolic iron-sulfur (Fe/S) protein assembly machinery. Required for the maturation of extramitochondrial Fe/S proteins. This Drosophila erecta (Fruit fly) protein is Probable cytosolic iron-sulfur protein assembly protein Ciao1.